A 490-amino-acid chain; its full sequence is Aspartyl/glutamyl-tRNA(Asn/Gln) amidotransferase subunit B (490 aa).

This sequence belongs to the GatB/GatE family. GatB subfamily. In terms of assembly, heterotrimer of A, B and C subunits.

It catalyses the reaction L-glutamyl-tRNA(Gln) + L-glutamine + ATP + H2O = L-glutaminyl-tRNA(Gln) + L-glutamate + ADP + phosphate + H(+). The enzyme catalyses L-aspartyl-tRNA(Asn) + L-glutamine + ATP + H2O = L-asparaginyl-tRNA(Asn) + L-glutamate + ADP + phosphate + 2 H(+). Its function is as follows. Allows the formation of correctly charged Asn-tRNA(Asn) or Gln-tRNA(Gln) through the transamidation of misacylated Asp-tRNA(Asn) or Glu-tRNA(Gln) in organisms which lack either or both of asparaginyl-tRNA or glutaminyl-tRNA synthetases. The reaction takes place in the presence of glutamine and ATP through an activated phospho-Asp-tRNA(Asn) or phospho-Glu-tRNA(Gln). In Methylorubrum populi (strain ATCC BAA-705 / NCIMB 13946 / BJ001) (Methylobacterium populi), this protein is Aspartyl/glutamyl-tRNA(Asn/Gln) amidotransferase subunit B.